The following is a 187-amino-acid chain: dCTP deaminase, dUMP-forming (187 aa).

Residues 101–106, D119, 127–129, Q148, Y162, K170, and Q174 contribute to the dCTP site; these read KSSLGR and TLE. E129 functions as the Proton donor/acceptor in the catalytic mechanism.

Belongs to the dCTP deaminase family. As to quaternary structure, homotrimer.

The catalysed reaction is dCTP + 2 H2O = dUMP + NH4(+) + diphosphate. Its pathway is pyrimidine metabolism; dUMP biosynthesis; dUMP from dCTP: step 1/1. Its function is as follows. Bifunctional enzyme that catalyzes both the deamination of dCTP to dUTP and the hydrolysis of dUTP to dUMP without releasing the toxic dUTP intermediate. This is dCTP deaminase, dUMP-forming from Corynebacterium diphtheriae (strain ATCC 700971 / NCTC 13129 / Biotype gravis).